The primary structure comprises 88 residues: MTILASISSIGNVKSISKSNNFSSLSNSSLQSSNSIQCGCGGGSPLIGTVGNLVGGVLVGTGIILGTVVGTVNGVVGGLLSGPNCGCH.

The protein belongs to the hssA/B family.

The polypeptide is HssA/B-like protein 11 (hssl11) (Dictyostelium discoideum (Social amoeba)).